Here is a 202-residue protein sequence, read N- to C-terminus: Imidazole glycerol phosphate synthase subunit HisH (202 aa).

The 200-residue stretch at 3–202 folds into the Glutamine amidotransferase type-1 domain; it reads RIVILDYGLG…KILKNFVDMC (200 aa). The Nucleophile role is filled by Cys-79. Active-site residues include His-183 and Glu-185.

Heterodimer of HisH and HisF.

The protein resides in the cytoplasm. It catalyses the reaction 5-[(5-phospho-1-deoxy-D-ribulos-1-ylimino)methylamino]-1-(5-phospho-beta-D-ribosyl)imidazole-4-carboxamide + L-glutamine = D-erythro-1-(imidazol-4-yl)glycerol 3-phosphate + 5-amino-1-(5-phospho-beta-D-ribosyl)imidazole-4-carboxamide + L-glutamate + H(+). The catalysed reaction is L-glutamine + H2O = L-glutamate + NH4(+). The protein operates within amino-acid biosynthesis; L-histidine biosynthesis; L-histidine from 5-phospho-alpha-D-ribose 1-diphosphate: step 5/9. Its function is as follows. IGPS catalyzes the conversion of PRFAR and glutamine to IGP, AICAR and glutamate. The HisH subunit catalyzes the hydrolysis of glutamine to glutamate and ammonia as part of the synthesis of IGP and AICAR. The resulting ammonia molecule is channeled to the active site of HisF. The sequence is that of Imidazole glycerol phosphate synthase subunit HisH from Methanosarcina barkeri (strain Fusaro / DSM 804).